A 375-amino-acid chain; its full sequence is Xylose transport system permease protein XylH (375 aa).

10 consecutive transmembrane segments (helical) span residues 9–29, 52–72, 85–105, 118–138, 159–179, 199–219, 220–240, 271–291, 319–339, and 348–368; these read LQVYIMLIAIAVIMAFFSVAT, LAIGMVFVIISAEIDLSVGSL, VWWGFPLPVTIIATIALGLIF, VPSFIVTLAGYLAFRGILIGL, LSDIAGVILGGIAVIGFVLWG, DFTKYALFAVIVLGAIYLLND, YRGIPFPVLVLAVLAILGLFL, KLIIFAMNGVLVAIAGLILSA, LAGGVGSVFGVVIGALIIASL, and VPTFWQYIVKGGILLLAVWID.

Belongs to the binding-protein-dependent transport system permease family. AraH/RbsC subfamily.

The protein localises to the cell inner membrane. In terms of biological role, part of the binding-protein-dependent transport system for D-xylose. Probably responsible for the translocation of the substrate across the membrane. This Haemophilus influenzae (strain ATCC 51907 / DSM 11121 / KW20 / Rd) protein is Xylose transport system permease protein XylH (xylH).